We begin with the raw amino-acid sequence, 837 residues long: Protein translocase subunit SecA 1 (837 aa).

ATP-binding positions include glutamine 85, glycine 103 to threonine 107, and aspartate 492. Positions glutamine 787 to lysine 806 are enriched in basic and acidic residues. Residues glutamine 787–valine 813 are disordered. Zn(2+) contacts are provided by cysteine 821, cysteine 823, cysteine 832, and cysteine 833.

This sequence belongs to the SecA family. In terms of assembly, monomer and homodimer. Part of the essential Sec protein translocation apparatus which comprises SecA, SecYEG and auxiliary proteins SecDF. Other proteins may also be involved. Zn(2+) serves as cofactor.

It is found in the cell membrane. Its subcellular location is the cytoplasm. It carries out the reaction ATP + H2O + cellular proteinSide 1 = ADP + phosphate + cellular proteinSide 2.. Functionally, part of the Sec protein translocase complex. Interacts with the SecYEG preprotein conducting channel. Has a central role in coupling the hydrolysis of ATP to the transfer of proteins into and across the cell membrane, serving as an ATP-driven molecular motor driving the stepwise translocation of polypeptide chains across the membrane. This chain is Protein translocase subunit SecA 1, found in Geobacillus thermodenitrificans (strain NG80-2).